The sequence spans 443 residues: Mitochondrial enolase superfamily member 1 (443 aa).

Residues 24–26 (GAD) and tyrosine 34 contribute to the substrate site. A Phosphoserine modification is found at serine 148. A substrate-binding site is contributed by lysine 220. The active-site Proton donor/acceptor is lysine 222. Aspartate 250 serves as a coordination point for Mg(2+). Substrate is bound by residues asparagine 252, glutamate 276, glutamate 305, 355–357 (HAG), and glutamate 386. Mg(2+)-binding residues include glutamate 276 and glutamate 305. Histidine 355 is a catalytic residue.

It belongs to the mandelate racemase/muconate lactonizing enzyme family. ENOSF1 subfamily. Mg(2+) serves as cofactor. In terms of processing, could be sumoylated.

Its subcellular location is the mitochondrion. It carries out the reaction L-fuconate = 2-dehydro-3-deoxy-L-fuconate + H2O. Its function is as follows. Plays a role in the catabolism of L-fucose, a sugar that is part of the carbohydrates that are attached to cellular glycoproteins. Catalyzes the dehydration of L-fuconate to 2-keto-3-deoxy-L-fuconate by the abstraction of the 2-proton to generate an enediolate intermediate that is stabilized by the magnesium ion. The polypeptide is Mitochondrial enolase superfamily member 1 (ENOSF1) (Homo sapiens (Human)).